We begin with the raw amino-acid sequence, 129 residues long: Putative zinc finger protein 702 (129 aa).

C2H2-type zinc fingers lie at residues 34-56 (YKCD…HRCH), 62-84 (YKCN…KAIH), and 90-112 (HKCN…HRLH).

The protein belongs to the krueppel C2H2-type zinc-finger protein family.

It localises to the nucleus. May be involved in transcriptional regulation. The protein is Putative zinc finger protein 702 (ZNF702P) of Homo sapiens (Human).